The chain runs to 149 residues: Hordoindoline-A (149 aa).

Positions Met-1–Ala-19 are cleaved as a signal peptide. A propeptide spanning residues Gln-20–Tyr-28 is cleaved from the precursor. Positions Tyr-148–Trp-149 are cleaved as a propeptide — removed in mature form.

In terms of processing, five disulfide bonds are present. Found in endosperm and aleurone layer of developing kernels, but not in the embryo.

The protein resides in the membrane. It is found in the secreted. It localises to the extracellular space. Functionally, acts as a membranotoxin, probably through its antibacterial and antifungal activities, contributing to the defense mechanism of the plant against predators. Forms monovalent cation-selective ion channels in membranes. Contributes to grain texture and hardness. This chain is Hordoindoline-A (HINA), found in Hordeum vulgare (Barley).